Reading from the N-terminus, the 256-residue chain is MANRERDRELLIPVADFGDKDDGSSSKPSSSSSASSSHQSGHETLSLFIRGWASKKFMTGCVILLPIAVTFYTTWWFIHFVDGFFSPIYALLGINIFGFGFLTSIAFIFLVGVFMSSWLGASVLNLGEWFIKRMPFVRHIYNASKQISTAISPDQNTQAFKEVAIIRHPRVGEYAFGFITSTVVLQNYPTEEELCCVYVPTNHLYIGDILLVNSNDVIRPNLSVREGIEIVVSGGMSMPQILSTLDKPLASIGNES.

Basic and acidic residues predominate over residues 1-10 (MANRERDREL). The segment at 1-39 (MANRERDRELLIPVADFGDKDDGSSSKPSSSSSASSSHQ) is disordered. At 1-60 (MANRERDRELLIPVADFGDKDDGSSSKPSSSSSASSSHQSGHETLSLFIRGWASKKFMTG) the chain is on the cytoplasmic side. Positions 25 to 39 (SSKPSSSSSASSSHQ) are enriched in low complexity. A helical membrane pass occupies residues 61 to 81 (CVILLPIAVTFYTTWWFIHFV). The Extracellular segment spans residues 82 to 93 (DGFFSPIYALLG). A helical transmembrane segment spans residues 94–114 (INIFGFGFLTSIAFIFLVGVF). Residues 115 to 256 (MSSWLGASVL…KPLASIGNES (142 aa)) lie on the Cytoplasmic side of the membrane.

Belongs to the plant COV1 protein family. As to expression, expressed at low levels in flowers, stems, roots and leaves.

The protein resides in the membrane. The chain is Protein LIKE COV 1 from Arabidopsis thaliana (Mouse-ear cress).